The chain runs to 894 residues: Histone-lysine N-methyltransferase EZ2 (894 aa).

A compositionally biased stretch (low complexity) spans 1 to 11 (MASSSKASDSS). 3 disordered regions span residues 1-25 (MASS…GKDA), 395-447 (SSVS…KRQK), and 491-513 (KKTS…VGRQ). The span at 395 to 421 (SSVSAEESTTTPSADISETENVSSDLP) shows a compositional bias: polar residues. The segment covering 425–435 (LRKHKISKHGP) has biased composition (basic residues). Positions 503–513 (PATTMENVGRQ) are enriched in polar residues. Residues 527-577 (TLSCWSALERDLYLKGIEIFGKNSCLIARNLLSGLKTCIEVANYMYNNGAA) form the SANT domain. One can recognise a CXC domain in the interval 627–731 (AGHPTVRKRT…SLGEPLARGD (105 aa)). In terms of domain architecture, SET spans 746–861 (QRILLGRSDV…ASEELFYDYR (116 aa)). The disordered stretch occupies residues 867-894 (APAWARRPEGSKKDEASVSHRRAHKVAR). The span at 872–884 (RRPEGSKKDEASV) shows a compositional bias: basic and acidic residues. Residues 885-894 (SHRRAHKVAR) show a composition bias toward basic residues.

It belongs to the class V-like SAM-binding methyltransferase superfamily. Histone-lysine methyltransferase family. EZ subfamily.

The protein resides in the nucleus. It catalyses the reaction L-lysyl(27)-[histone H3] + 3 S-adenosyl-L-methionine = N(6),N(6),N(6)-trimethyl-L-lysyl(27)-[histone H3] + 3 S-adenosyl-L-homocysteine + 3 H(+). Its function is as follows. Polycomb group (PcG) protein. Catalytic subunit of some PcG multiprotein complex, which methylates 'Lys-27' of histone H3, leading to transcriptional repression of the affected target genes. PcG proteins are not required to initiate repression, but to maintain it during later stages of development. This chain is Histone-lysine N-methyltransferase EZ2 (EZ2), found in Zea mays (Maize).